Here is a 189-residue protein sequence, read N- to C-terminus: Peptidyl-tRNA hydrolase (189 aa).

Tyrosine 16 contributes to the tRNA binding site. Histidine 21 (proton acceptor) is an active-site residue. 3 residues coordinate tRNA: phenylalanine 67, asparagine 69, and asparagine 115.

The protein belongs to the PTH family. In terms of assembly, monomer.

Its subcellular location is the cytoplasm. The catalysed reaction is an N-acyl-L-alpha-aminoacyl-tRNA + H2O = an N-acyl-L-amino acid + a tRNA + H(+). In terms of biological role, hydrolyzes ribosome-free peptidyl-tRNAs (with 1 or more amino acids incorporated), which drop off the ribosome during protein synthesis, or as a result of ribosome stalling. Functionally, catalyzes the release of premature peptidyl moieties from peptidyl-tRNA molecules trapped in stalled 50S ribosomal subunits, and thus maintains levels of free tRNAs and 50S ribosomes. This chain is Peptidyl-tRNA hydrolase, found in Legionella pneumophila (strain Lens).